A 70-amino-acid chain; its full sequence is Putative antitoxin VapB34 (70 aa).

Functionally, antitoxin component of a possible type II toxin-antitoxin (TA) system. The cognate toxin is VapC34. The sequence is that of Putative antitoxin VapB34 (vapB34) from Mycobacterium tuberculosis (strain CDC 1551 / Oshkosh).